A 184-amino-acid chain; its full sequence is uncharacterized protein (184 aa).

Positions His-146–Pro-177 are disordered. Over residues Ser-150 to Ala-172 the composition is skewed to polar residues.

This is an uncharacterized protein from Picosynechococcus sp. (strain ATCC 27264 / PCC 7002 / PR-6) (Agmenellum quadruplicatum).